Reading from the N-terminus, the 89-residue chain is Small ribosomal subunit protein uS17 (89 aa).

The protein belongs to the universal ribosomal protein uS17 family. Part of the 30S ribosomal subunit.

Functionally, one of the primary rRNA binding proteins, it binds specifically to the 5'-end of 16S ribosomal RNA. This Aromatoleum aromaticum (strain DSM 19018 / LMG 30748 / EbN1) (Azoarcus sp. (strain EbN1)) protein is Small ribosomal subunit protein uS17.